The following is a 91-amino-acid chain: C-C motif chemokine 5 (91 aa).

Positions 1–23 (MKVSATAFAVLLMAAALCAPASA) are cleaved as a signal peptide. 2 disulfide bridges follow: C33-C57 and C34-C73.

The protein belongs to the intercrine beta (chemokine CC) family.

The protein resides in the secreted. In terms of biological role, chemoattractant for blood monocytes, memory T-helper cells and eosinophils. Causes the release of histamine from basophils and activates eosinophils. May activate several chemokine receptors including CCR1, CCR3, CCR4 and CCR5. May also be an agonist of the G protein-coupled receptor GPR75. Together with GPR75, may play a role in neuron survival through activation of a downstream signaling pathway involving the PI3, Akt and MAP kinases. By activating GPR75 may also play a role in insulin secretion by islet cells. This is C-C motif chemokine 5 (CCL5) from Bos taurus (Bovine).